We begin with the raw amino-acid sequence, 195 residues long: Probable GTP-binding protein EngB (195 aa).

The EngB-type G domain maps to 24-195; sequence GLSEVALSGR…QIWDLIANYL (172 aa). GTP is bound by residues 32–39, 59–63, 77–80, 144–147, and 176–178; these read GRSNVGKS, GKTQT, DVPG, TKED, and YSS. Residues Ser-39 and Thr-61 each coordinate Mg(2+).

This sequence belongs to the TRAFAC class TrmE-Era-EngA-EngB-Septin-like GTPase superfamily. EngB GTPase family. Requires Mg(2+) as cofactor.

Functionally, necessary for normal cell division and for the maintenance of normal septation. This is Probable GTP-binding protein EngB from Staphylococcus haemolyticus (strain JCSC1435).